Reading from the N-terminus, the 121-residue chain is Large ribosomal subunit protein bL12 (121 aa).

Belongs to the bacterial ribosomal protein bL12 family. In terms of assembly, homodimer. Part of the ribosomal stalk of the 50S ribosomal subunit. Forms a multimeric L10(L12)X complex, where L10 forms an elongated spine to which 2 to 4 L12 dimers bind in a sequential fashion. Binds GTP-bound translation factors.

Functionally, forms part of the ribosomal stalk which helps the ribosome interact with GTP-bound translation factors. Is thus essential for accurate translation. The sequence is that of Large ribosomal subunit protein bL12 from Macrococcus caseolyticus (strain JCSC5402) (Macrococcoides caseolyticum).